The following is a 374-amino-acid chain: MPGKELTDPCVDCADAEAILTVRCRRLCQDCYARFVNFKVFKRMENYRLRRNMSRTGPCKLLLPLSYGTSSSVLLHILNAQIQHERAKSHPSPGFELHVLVIEPSTVSTSSPPHDEGFDLLQQTFPSHSFTRVSLHNVFELDPSIQDVLSQFSSEGFTDDATMSDKDRLDAFRASITTATSRVDVDYILITRLVVAFAKKIECRGVVWGDSDTRLAAKTLANVAKGRGSAITWQVCDGMSPFGLEFSFPLRDLYKAEVQNYASFFPELAKIIIPDEPPSENILTKNLSIDELMMRYVQTQGEKYPGIMANVTRTASKLQASLVPANVPRCSFCGGSMLNQDGQIIMGGAAGNSEVRQGAELCYACTRSRPEVSY.

It belongs to the CTU2/NCS2 family.

It is found in the cytoplasm. Its pathway is tRNA modification; 5-methoxycarbonylmethyl-2-thiouridine-tRNA biosynthesis. Its function is as follows. Plays a central role in 2-thiolation of mcm(5)S(2)U at tRNA wobble positions of tRNA(Lys), tRNA(Glu) and tRNA(Gln). May act by forming a heterodimer with ncs6 that ligates sulfur from thiocarboxylated urm1 onto the uridine of tRNAs at wobble position. Prior mcm(5) tRNA modification by the elongator complex is required for 2-thiolation. May also be involved in protein urmylation. This is Cytoplasmic tRNA 2-thiolation protein 2 (ncs2) from Aspergillus clavatus (strain ATCC 1007 / CBS 513.65 / DSM 816 / NCTC 3887 / NRRL 1 / QM 1276 / 107).